The sequence spans 165 residues: PTS system glucose-specific EIIA component (165 aa).

Positions 33–137 (DPVFAGRMMG…STITPIVITN (105 aa)) constitute a PTS EIIA type-1 domain. H70 and H85 together coordinate Zn(2+). Catalysis depends on H85, which acts as the Tele-phosphohistidine intermediate; for EIIA activity. The residue at position 85 (H85) is a Phosphohistidine; by HPr.

Heterodimer with glycerol kinase (glpk). Zn(2+) serves as cofactor.

It localises to the cytoplasm. In terms of biological role, the phosphoenolpyruvate-dependent sugar phosphotransferase system (sugar PTS), a major carbohydrate active transport system, catalyzes the phosphorylation of incoming sugar substrates concomitantly with their translocation across the cell membrane. The enzyme II complex composed of PtsG and Crr is involved in glucose transport. The polypeptide is PTS system glucose-specific EIIA component (crr) (Bacillus anthracis).